We begin with the raw amino-acid sequence, 695 residues long: MGAKEKLEAMLNVALRVPSIMLLDVLYRWDVSSFFKQIQRSSLNNNPLFQYKYLALNMHYVGYILSVVLLTLPRQHLAKLYLYFVAALLLYAGHQISRDYVRSELESGYEGPMHIEPLSMNRFITALVGQLVVCTLCSCVMKTKQIWLFSAHMLPLLARLCLVPIETIVVINKFAMIFTGLEVLYFLASNLLVPFNLAKSAYRELAQVVEVYGLLALGMSLWNQLVVPVLFMVFWLVLFALQIYTYFSTRDQPTSRERLLFLFLTSIAECCSTPYSLLGLVFTVSFVALGVLTLCKFYLQGYRAFMNDPAMNRGMTEGVTLLILAVQTGLIELQVVHRAFLLSIILFIVVASILQSMLEIADPIVLALGASRDKSLWKHFRAVSLCLFLLVFPSYMAYMICQFFHMDFWLLIIISSSILTSLQVLGTLFIYVLFMIEEFRKEPVENMDDVIYYVNGTYRLLEFLVALCVVAYGVSETVFGEWTVMGSMIIFIHSYYNVWLRAQLGWKSFLLRRDAVNKIKSLPVATKEQLEQHNDICSICYQDMNSAVITPCSHFFHPGCLKKWLYVQETCPLCHCQLKSLSQQATGESGSSTNPVSEQSATNPPLGPVSRAEVTTEPLAAVPTRSALEQEPTMDIKVSGSVEKRIGELEAHFSQGEANLNSNEVLQRLQAKGEANPEDLNVKALPPECEHCAEI.

13 helical membrane passes run 53–73 (YLALNMHYVGYILSVVLLTLP), 77–97 (LAKLYLYFVAALLLYAGHQIS), 123–143 (FITALVGQLVVCTLCSCVMKT), 146–166 (IWLFSAHMLPLLARLCLVPIE), 168–188 (IVVINKFAMIFTGLEVLYFLA), 225–245 (LVVPVLFMVFWLVLFALQIYT), 275–295 (YSLLGLVFTVSFVALGVLTLC), 316–336 (TEGVTLLILAVQTGLIELQVV), 340–360 (FLLSIILFIVVASILQSMLEI), 384–404 (SLCLFLLVFPSYMAYMICQFF), 410–430 (LLIIISSSILTSLQVLGTLFI), 460–480 (LLEFLVALCVVAYGVSETVFG), and 482–502 (WTVMGSMIIFIHSYYNVWLRA). An RING-type; atypical zinc finger spans residues 537–575 (CSICYQDMNSAVITPCSHFFHPGCLKKWLYVQETCPLCH). The segment covering 585–603 (ATGESGSSTNPVSEQSATN) has biased composition (polar residues). The interval 585 to 610 (ATGESGSSTNPVSEQSATNPPLGPVS) is disordered.

It localises to the membrane. The polypeptide is RING finger protein 145 (rnf145) (Xenopus tropicalis (Western clawed frog)).